The primary structure comprises 313 residues: MLDNVLRIATRQSPLALWQAHYVKDALMATHPGLTVELVPMVTRGDVILDTPLAKVGGKGLFVKELEIALLEKRADIAVHSMKDVPVAFPDGLGLVTICEREDPRDAFVSNKYHSLDDLPAGSIVGTSSLRRQCQLAERRPDLIIRSLRGNVGTRLGKLDNGDYDAIILAVAGLKRLGLESRIRTALPPDVSLPAVGQGAVGIECRLDDARTQALLAPLNHSQTALRVTAERAMNTRLEGGCQVPIGSYAEIINGEIWLRALVGAPDGSVMVRGERRGSPEQAEQMGISLAEELLENGARAILTEVYNGETPA.

Cys-242 carries the S-(dipyrrolylmethanemethyl)cysteine modification.

Belongs to the HMBS family. Monomer. Dipyrromethane is required as a cofactor.

It catalyses the reaction 4 porphobilinogen + H2O = hydroxymethylbilane + 4 NH4(+). It functions in the pathway porphyrin-containing compound metabolism; protoporphyrin-IX biosynthesis; coproporphyrinogen-III from 5-aminolevulinate: step 2/4. Functionally, tetrapolymerization of the monopyrrole PBG into the hydroxymethylbilane pre-uroporphyrinogen in several discrete steps. This Salmonella dublin (strain CT_02021853) protein is Porphobilinogen deaminase.